Consider the following 183-residue polypeptide: Ribosome-recycling factor (183 aa).

The protein belongs to the RRF family.

It localises to the cytoplasm. In terms of biological role, responsible for the release of ribosomes from messenger RNA at the termination of protein biosynthesis. May increase the efficiency of translation by recycling ribosomes from one round of translation to another. The sequence is that of Ribosome-recycling factor from Bifidobacterium longum (strain DJO10A).